Reading from the N-terminus, the 369-residue chain is Probable L-tyrosine/L-aspartate decarboxylase (369 aa).

Lys224 carries the post-translational modification N6-(pyridoxal phosphate)lysine.

The protein belongs to the group II decarboxylase family. MfnA subfamily. Pyridoxal 5'-phosphate is required as a cofactor.

It catalyses the reaction L-tyrosine + H(+) = tyramine + CO2. The catalysed reaction is L-aspartate + H(+) = beta-alanine + CO2. It participates in cofactor biosynthesis; methanofuran biosynthesis. The protein operates within cofactor biosynthesis; coenzyme A biosynthesis. Its function is as follows. Catalyzes the decarboxylation of L-tyrosine to produce tyramine for methanofuran biosynthesis. Can also catalyze the decarboxylation of L-aspartate to produce beta-alanine for coenzyme A (CoA) biosynthesis. This Methanospirillum hungatei JF-1 (strain ATCC 27890 / DSM 864 / NBRC 100397 / JF-1) protein is Probable L-tyrosine/L-aspartate decarboxylase.